A 205-amino-acid chain; its full sequence is Mitochondrial ATP-independent inner membrane protease subunit 2 (205 aa).

Active-site residues include Glu-59 and Arg-104.

This sequence belongs to the peptidase S26 family. IMP1 subfamily. In terms of assembly, heterodimer of 2 subunits, IMP1A/B and IMP12.

The protein localises to the mitochondrion inner membrane. Functionally, catalyzes the removal of transit peptides required for the targeting of proteins from the mitochondrial matrix, across the inner membrane, into the inter-membrane space. In Arabidopsis thaliana (Mouse-ear cress), this protein is Mitochondrial ATP-independent inner membrane protease subunit 2.